The sequence spans 807 residues: Dynein axonemal intermediate chain 4 (807 aa).

2 stretches are compositionally biased toward polar residues: residues 1 to 11 and 22 to 31; these read MHSSPTSTRKQ and PRKSISFINP. Disordered regions lie at residues 1 to 44 and 300 to 320; these read MHSS…AASN and YSSKGSLPAKDRDPKIQDSES. Low complexity predominate over residues 32–43; that stretch reads SKSSAGKGYAAS. Basic and acidic residues predominate over residues 308 to 317; that stretch reads AKDRDPKIQD. WD repeat units follow at residues 493–533, 542–590, 617–657, 661–701, 704–743, and 749–788; these read QSSY…NIPV, KHLG…DCHD, SRQA…QYLE, GHKG…PFLS, PTTYVVYDVSWSPKSAYIFAAANENRVEIWDLQISTLDPL, and NPGIKFTTVLFAKETDCLLVGDSDGQVAVYELRNMPTASD.

In terms of assembly, part of the multisubunit axonemal dynein complex formed at least of two heavy chains and a number of intermediate and light chains. Associated with axonemal dynein subunits such as, DNAH2, DNAI3, and DYNLT1. Interacts with DYNLT1. As to expression, highly expressed in tissues containing motile cilia, including the trachea, lung, oviduct, and testis.

The protein localises to the cytoplasm. The protein resides in the cytoskeleton. It localises to the flagellum axoneme. It is found in the cilium axoneme. Its subcellular location is the dynein axonemal particle. Plays a critical role in the assembly of axonemal dynein complex, thereby playing a role in ciliary motility. The sequence is that of Dynein axonemal intermediate chain 4 (Dnai4) from Mus musculus (Mouse).